The primary structure comprises 131 residues: Cuticle protein 79, isoform B (131 aa).

3 repeat units span residues 37 to 40 (AAPA), 45 to 48 (AAPA), and 53 to 56 (AAPA).

Component of the cuticle of migratory locust which contains more than 100 different structural proteins. The polypeptide is Cuticle protein 79, isoform B (Locusta migratoria (Migratory locust)).